We begin with the raw amino-acid sequence, 1094 residues long: Transcriptional regulator CRZ1 (1094 aa).

Disordered stretches follow at residues 1-29 (MADP…STSS), 44-81 (FNSD…LDMM), 93-428 (GRRQ…FPPS), and 477-519 (RAGA…RTLS). Composition is skewed to basic and acidic residues over residues 60-78 (QARK…KRYL) and 94-103 (RRQESLRKES). Residue S103 is modified to Phosphoserine. Positions 148 to 159 (PNQPQQPSQQPP) are enriched in low complexity. Composition is skewed to polar residues over residues 166–187 (SEQS…QSSG) and 201–217 (GTTS…QISP). Composition is skewed to low complexity over residues 228–241 (QPPQ…QQQQ) and 252–262 (EQQQQYAQGEG). Residues 286–324 (VISNTSHPSQYPSRTSSPFPQQSQSNMVPASTVNQTRTE) are compositionally biased toward polar residues. A phosphoserine mark is found at S288 and S329. Over residues 325–342 (SFPASRSPSPFAPQQASQ) the composition is skewed to low complexity. 2 stretches are compositionally biased toward polar residues: residues 343–379 (TEAS…FNKP) and 396–412 (IVTQ…LNQP). Residues 477 to 493 (RAGAARGAQRQGPQGQG) are compositionally biased toward low complexity. A compositionally biased stretch (polar residues) spans 507–519 (PSPQSHPLPRTLS). S508, S569, S765, and S810 each carry phosphoserine. The segment at 835–888 (ITGDDGSLLPPSNRGHAMSHSRHSSTSSIRSASPALSISSQGSSFSHHSPRMDM) is disordered. The span at 858-881 (SSTSSIRSASPALSISSQGSSFSH) shows a compositional bias: low complexity. Residues 944–968 (FKCPVPGCGSTFTRHFNLKGHLRSH) form a C2H2-type 1 zinc finger. The C2H2-type 2; degenerate zinc finger occupies 1007-1029 (FECEGCGKKFARLDALTRHHKSE). Residues 1037–1094 (THPLPTNFDGSPMSESQYKTYKGIKSTPEGSGRRLSSTASGSGSGKRRSKKSETSEED) form a disordered region.

Post-translationally, phosphorylated. Dephosphorylated by calcineurin (CNA1) which promotes nuclear localization.

The protein resides in the cytoplasm. Its subcellular location is the cytosol. It localises to the nucleus. Functionally, DNA-binding transcriptional activator that interacts with calcineurin-dependent response element (CDRE) promoters. Activates expression of genes required to maintain cell wall integrity during stress. Activates expression of genes required for transepithelial migration through the host blood-brain barrier. Required for adaptation to host temperature during infection. The polypeptide is Transcriptional regulator CRZ1 (Cryptococcus neoformans var. grubii serotype A (strain H99 / ATCC 208821 / CBS 10515 / FGSC 9487) (Filobasidiella neoformans var. grubii)).